We begin with the raw amino-acid sequence, 232 residues long: Phosphatidylserine decarboxylase proenzyme (232 aa).

Ser190 (schiff-base intermediate with substrate; via pyruvic acid) is an active-site residue. Ser190 is subject to Pyruvic acid (Ser); by autocatalysis.

This sequence belongs to the phosphatidylserine decarboxylase family. PSD-A subfamily. In terms of assembly, heterodimer of a large membrane-associated beta subunit and a small pyruvoyl-containing alpha subunit. The cofactor is pyruvate. In terms of processing, is synthesized initially as an inactive proenzyme. Formation of the active enzyme involves a self-maturation process in which the active site pyruvoyl group is generated from an internal serine residue via an autocatalytic post-translational modification. Two non-identical subunits are generated from the proenzyme in this reaction, and the pyruvate is formed at the N-terminus of the alpha chain, which is derived from the carboxyl end of the proenzyme. The post-translation cleavage follows an unusual pathway, termed non-hydrolytic serinolysis, in which the side chain hydroxyl group of the serine supplies its oxygen atom to form the C-terminus of the beta chain, while the remainder of the serine residue undergoes an oxidative deamination to produce ammonia and the pyruvoyl prosthetic group on the alpha chain.

Its subcellular location is the cell membrane. The catalysed reaction is a 1,2-diacyl-sn-glycero-3-phospho-L-serine + H(+) = a 1,2-diacyl-sn-glycero-3-phosphoethanolamine + CO2. Its pathway is phospholipid metabolism; phosphatidylethanolamine biosynthesis; phosphatidylethanolamine from CDP-diacylglycerol: step 2/2. Its function is as follows. Catalyzes the formation of phosphatidylethanolamine (PtdEtn) from phosphatidylserine (PtdSer). The sequence is that of Phosphatidylserine decarboxylase proenzyme from Rhodopseudomonas palustris (strain BisA53).